We begin with the raw amino-acid sequence, 459 residues long: Mitochondrial distribution and morphology protein 34 (459 aa).

Residues 1-190 (MSFRFNEAVF…LPSLIFNTSQ (190 aa)) form the SMP-LTD domain. The span at 338–347 (RSNSNDDNAK) shows a compositional bias: basic and acidic residues. A disordered region spans residues 338–375 (RSNSNDDNAKPRRRKIKCKKTRTPSNLQSQGEQAVDDS). The span at 348–359 (PRRRKIKCKKTR) shows a compositional bias: basic residues.

Belongs to the MDM34 family. In terms of assembly, component of the ER-mitochondria encounter structure (ERMES) or MDM complex, composed of MMM1, MDM10, MDM12 and MDM34. Ubiquitinated by a SCF (SKP1-CUL1-F-box protein) E3 ubiquitin-protein ligase complex containing the F-box protein MDM30. Ubiquitination is important for mitochondrial integrity.

It is found in the mitochondrion outer membrane. Component of the ERMES/MDM complex, which serves as a molecular tether to connect the endoplasmic reticulum (ER) and mitochondria. Components of this complex are involved in the control of mitochondrial shape and protein biogenesis, and function in nonvesicular lipid trafficking between the ER and mitochondria. MDM34 is required for the interaction of the ER-resident membrane protein MMM1 and the outer mitochondrial membrane-resident beta-barrel protein MDM10. This chain is Mitochondrial distribution and morphology protein 34, found in Saccharomyces cerevisiae (strain AWRI1631) (Baker's yeast).